A 313-amino-acid polypeptide reads, in one-letter code: Ribosomal RNA small subunit methyltransferase H (313 aa).

S-adenosyl-L-methionine contacts are provided by residues 35-37 (GGH), aspartate 55, phenylalanine 80, aspartate 102, and glutamine 109.

Belongs to the methyltransferase superfamily. RsmH family.

It is found in the cytoplasm. The enzyme catalyses cytidine(1402) in 16S rRNA + S-adenosyl-L-methionine = N(4)-methylcytidine(1402) in 16S rRNA + S-adenosyl-L-homocysteine + H(+). Specifically methylates the N4 position of cytidine in position 1402 (C1402) of 16S rRNA. The sequence is that of Ribosomal RNA small subunit methyltransferase H from Shewanella frigidimarina (strain NCIMB 400).